The chain runs to 304 residues: Thiosulfate sulfurtransferase TUM1 (304 aa).

2 consecutive Rhodanese domains span residues 20 to 137 and 177 to 299; these read KVHR…PLDS and LAKK…PEWI. Basic and acidic residues predominate over residues 191–201; sequence RFEGTEPEPRS. The disordered stretch occupies residues 191–222; it reads RFEGTEPEPRSDIPSGHIPGTQPLPYGSLLDP. Serine 201 carries the phosphoserine modification. The active-site Cysteine persulfide intermediate is the cysteine 259. Phosphoserine is present on serine 264.

It localises to the mitochondrion. It is found in the cytoplasm. It carries out the reaction thiosulfate + hydrogen cyanide = thiocyanate + sulfite + 2 H(+). Sulfur transferase that accepts persulfite from NFS1 and transfers it to UBA4 in the pathway for 2-thiolation of the wobble uridine base of tRNAs. Stimulates sulfur transfer by NFS1. Involved in metabolism of sterol esters in a tRNA thiolation pathway-independent manner. This is Thiosulfate sulfurtransferase TUM1 from Saccharomyces cerevisiae (strain ATCC 204508 / S288c) (Baker's yeast).